We begin with the raw amino-acid sequence, 118 residues long: Aspartate 1-decarboxylase (118 aa).

S25 functions as the Schiff-base intermediate with substrate; via pyruvic acid in the catalytic mechanism. S25 is modified (pyruvic acid (Ser)). T57 is a binding site for substrate. Y58 (proton donor) is an active-site residue. Residue 73 to 75 participates in substrate binding; sequence GAA.

This sequence belongs to the PanD family. As to quaternary structure, heterooctamer of four alpha and four beta subunits. Pyruvate is required as a cofactor. Post-translationally, is synthesized initially as an inactive proenzyme, which is activated by self-cleavage at a specific serine bond to produce a beta-subunit with a hydroxyl group at its C-terminus and an alpha-subunit with a pyruvoyl group at its N-terminus.

The protein resides in the cytoplasm. The catalysed reaction is L-aspartate + H(+) = beta-alanine + CO2. The protein operates within cofactor biosynthesis; (R)-pantothenate biosynthesis; beta-alanine from L-aspartate: step 1/1. Its function is as follows. Catalyzes the pyruvoyl-dependent decarboxylation of aspartate to produce beta-alanine. In Hyphomonas neptunium (strain ATCC 15444), this protein is Aspartate 1-decarboxylase.